Consider the following 372-residue polypeptide: Cytochrome b (372 aa).

A run of 4 helical transmembrane segments spans residues 25–45 (FGSM…FLSM), 69–90 (WMMQ…YIHV), 105–125 (WLSG…GYVL), and 170–190 (FFAL…LHIM). Heme b-binding residues include histidine 75 and histidine 89. 2 residues coordinate heme b: histidine 174 and histidine 188. An a ubiquinone-binding site is contributed by histidine 193. Transmembrane regions (helical) follow at residues 218 to 238 (YKDL…ISFI), 280 to 300 (LGGA…PFTH), 312 to 332 (FMQL…WTAT), and 339 to 358 (YTMI…MSNP).

The protein belongs to the cytochrome b family. In terms of assembly, the cytochrome bc1 complex contains 3 respiratory subunits (MT-CYB, CYC1 and UQCRFS1), 2 core proteins (UQCRC1 and UQCRC2) and probably 6 low-molecular weight proteins. Heme b serves as cofactor.

The protein localises to the mitochondrion inner membrane. Functionally, component of the ubiquinol-cytochrome c reductase complex (complex III or cytochrome b-c1 complex) that is part of the mitochondrial respiratory chain. The b-c1 complex mediates electron transfer from ubiquinol to cytochrome c. Contributes to the generation of a proton gradient across the mitochondrial membrane that is then used for ATP synthesis. In Acrantophis madagascariensis (Madagascar ground boa), this protein is Cytochrome b (MT-CYB).